The sequence spans 511 residues: DEP domain-containing protein 7 (511 aa).

Residues 46–136 (LQTQVEVKKR…SSCSLYRFTT (91 aa)) form the DEP domain.

Belongs to the DEPDC7 family. Expressed in liver.

This Homo sapiens (Human) protein is DEP domain-containing protein 7 (DEPDC7).